Here is a 389-residue protein sequence, read N- to C-terminus: Nicotinate phosphoribosyltransferase (389 aa).

The residue at position 216 (H216) is a Phosphohistidine; by autocatalysis.

The protein belongs to the NAPRTase family. Transiently phosphorylated on a His residue during the reaction cycle. Phosphorylation strongly increases the affinity for substrates and increases the rate of nicotinate D-ribonucleotide production. Dephosphorylation regenerates the low-affinity form of the enzyme, leading to product release.

The enzyme catalyses nicotinate + 5-phospho-alpha-D-ribose 1-diphosphate + ATP + H2O = nicotinate beta-D-ribonucleotide + ADP + phosphate + diphosphate. It functions in the pathway cofactor biosynthesis; NAD(+) biosynthesis; nicotinate D-ribonucleotide from nicotinate: step 1/1. Its function is as follows. Catalyzes the synthesis of beta-nicotinate D-ribonucleotide from nicotinate and 5-phospho-D-ribose 1-phosphate at the expense of ATP. This Ralstonia nicotianae (strain ATCC BAA-1114 / GMI1000) (Ralstonia solanacearum) protein is Nicotinate phosphoribosyltransferase.